The following is a 591-amino-acid chain: Alternative cytochrome c oxidase subunit 1 (591 aa).

Residues 40-60 (VIAIQYSLTASAIGLVALVLS) traverse the membrane as a helical segment. His-88 is a binding site for heme b. 11 consecutive transmembrane segments (helical) span residues 90–110 (MIMV…NYLI), 126–146 (MLSY…FFVP), 172–192 (GIVL…MGGL), 215–235 (VWGI…LFVG), 274–294 (LFWF…FGIV), 313–333 (VWAI…HMYV), 337–357 (YPYF…PTAI), 377–397 (MLFA…GLFL), 412–432 (VVAH…LGAI), 453–473 (FWVT…LGLL), and 498–518 (FITV…FNLV). The Cu cation site is built by His-280, Tyr-284, His-329, and His-330. Positions 280–284 (HPEVY) form a cross-link, 1'-histidyl-3'-tyrosine (His-Tyr). His-415 and His-417 together coordinate heme b.

Belongs to the heme-copper respiratory oxidase family. This alternate cytochrome c oxidase consists of a subunit I and two cytochromes c. Equivalents to subunit 2 and 3 are not present in this complex.

The protein localises to the cell membrane. The catalysed reaction is 4 Fe(II)-[cytochrome c] + O2 + 8 H(+)(in) = 4 Fe(III)-[cytochrome c] + 2 H2O + 4 H(+)(out). In terms of biological role, cytochrome c oxidase is the component of the respiratory chain that catalyzes the reduction of oxygen to water. Subunits 1-3 form the functional core of the enzyme complex. Co I is the catalytic subunit of the enzyme. Electrons originating in cytochrome c are transferred via the copper A center of subunit 2 and a low-spin heme of subunit 1 to the bimetallic center formed by a high-spin heme and copper B. The protein is Alternative cytochrome c oxidase subunit 1 (coxN) of Bradyrhizobium diazoefficiens (strain JCM 10833 / BCRC 13528 / IAM 13628 / NBRC 14792 / USDA 110).